Consider the following 677-residue polypeptide: WD and tetratricopeptide repeats protein 1 (677 aa).

5 WD repeats span residues 45 to 84, 88 to 129, 132 to 172, 182 to 222, and 265 to 305; these read GHSG…KLLS, GHTA…TIHM, DHTN…KHSE, GPMV…NHRK, and RLRV…RPYT. Ser352 carries the post-translational modification Phosphoserine. 2 TPR repeats span residues 361-394 and 396-431; these read LERV…APHN and MLYG…NPCH. The disordered stretch occupies residues 489 to 509; the sequence is EEKKAAGGGGGPVRLRSTSRK. Position 511 is a phosphoserine (Ser511). 2 WD repeats span residues 535-575 and 578-617; these read NTTT…LVRV and GDES…EDLT. The disordered stretch occupies residues 655–677; the sequence is SSGGAGASDDEDSAEGQVQCRPS.

The protein operates within protein modification; protein ubiquitination. May function as a substrate receptor for CUL4-DDB1 E3 ubiquitin-protein ligase complex. In Mus musculus (Mouse), this protein is WD and tetratricopeptide repeats protein 1 (Wdtc1).